We begin with the raw amino-acid sequence, 412 residues long: CCA-adding enzyme (412 aa).

2 residues coordinate ATP: Ser41 and Lys44. CTP contacts are provided by Ser41 and Lys44. Mg(2+)-binding residues include Asp53, Asp55, and Asp106. Residues His129, Lys149, and Tyr158 each contribute to the ATP site. The CTP site is built by His129, Lys149, and Tyr158.

Belongs to the tRNA nucleotidyltransferase/poly(A) polymerase family. Archaeal CCA-adding enzyme subfamily. Homodimer. It depends on Mg(2+) as a cofactor.

It carries out the reaction a tRNA precursor + 2 CTP + ATP = a tRNA with a 3' CCA end + 3 diphosphate. The catalysed reaction is a tRNA with a 3' CCA end + 2 CTP + ATP = a tRNA with a 3' CCACCA end + 3 diphosphate. Functionally, catalyzes the addition and repair of the essential 3'-terminal CCA sequence in tRNAs without using a nucleic acid template. Adds these three nucleotides in the order of C, C, and A to the tRNA nucleotide-73, using CTP and ATP as substrates and producing inorganic pyrophosphate. tRNA 3'-terminal CCA addition is required both for tRNA processing and repair. Also involved in tRNA surveillance by mediating tandem CCA addition to generate a CCACCA at the 3' terminus of unstable tRNAs. While stable tRNAs receive only 3'-terminal CCA, unstable tRNAs are marked with CCACCA and rapidly degraded. In Saccharolobus solfataricus (strain ATCC 35092 / DSM 1617 / JCM 11322 / P2) (Sulfolobus solfataricus), this protein is CCA-adding enzyme.